The chain runs to 265 residues: NADH dehydrogenase [ubiquinone] iron-sulfur protein 3, mitochondrial (265 aa).

A mitochondrion-targeting transit peptide spans 1–33; that stretch reads MAALIRNLGARAAVAALSAKHVVPAAGSTALRM.

The protein belongs to the complex I 30 kDa subunit family. Part of the mitochondrial membrane respiratory chain NADH dehydrogenase (Complex I). Interacts with sicily; interaction is stronger with unprocessed sicily protein.

It is found in the mitochondrion. It carries out the reaction a ubiquinone + NADH + 5 H(+)(in) = a ubiquinol + NAD(+) + 4 H(+)(out). In terms of biological role, core subunit of the mitochondrial membrane respiratory chain NADH dehydrogenase (Complex I) that is believed to belong to the minimal assembly required for catalysis. Complex I functions in the transfer of electrons from NADH to the respiratory chain. The immediate electron acceptor for the enzyme is believed to be ubiquinone. The polypeptide is NADH dehydrogenase [ubiquinone] iron-sulfur protein 3, mitochondrial (Drosophila melanogaster (Fruit fly)).